The primary structure comprises 219 residues: Cytochrome b6 (219 aa).

A helical membrane pass occupies residues 32 to 52 (IFYCFGGIVLTAFIFQGASGF). Cysteine 35 serves as a coordination point for heme c. Residues histidine 86 and histidine 100 each contribute to the heme b site. 3 consecutive transmembrane segments (helical) span residues 90-110 (SGCM…TGGF), 116-136 (LTWI…VTGY), and 190-210 (IHTF…FSLL). Residues histidine 191 and histidine 206 each contribute to the heme b site.

This sequence belongs to the cytochrome b family. PetB subfamily. The 4 large subunits of the cytochrome b6-f complex are cytochrome b6, subunit IV (17 kDa polypeptide, PetD), cytochrome f and the Rieske protein, while the 4 small subunits are PetG, PetL, PetM and PetN. The complex functions as a dimer. Heme b is required as a cofactor. It depends on heme c as a cofactor.

It is found in the plastid. The protein localises to the chloroplast thylakoid membrane. Its function is as follows. Component of the cytochrome b6-f complex, which mediates electron transfer between photosystem II (PSII) and photosystem I (PSI), cyclic electron flow around PSI, and state transitions. The sequence is that of Cytochrome b6 from Heterocapsa triquetra (Dinoflagellate).